A 314-amino-acid polypeptide reads, in one-letter code: R2-like ligand binding oxidase (314 aa).

3 residues coordinate Mn(2+): Glu68, Glu101, and His104. The 3-(O4'-tyrosyl)-valine (Val-Tyr) cross-link spans 71-162 (VTEDIQPFMS…AAQVRASVTY (92 aa)). Glu101 contacts Fe cation. Residues Glu167, Glu202, and His205 each coordinate Fe cation.

This sequence belongs to the ribonucleoside diphosphate reductase small chain family. R2-like ligand binding oxidase subfamily. In terms of assembly, homodimer. Fe cation serves as cofactor. Mn(2+) is required as a cofactor.

In terms of biological role, probable oxidase that might be involved in lipid metabolism. In Mycobacterium tuberculosis (strain ATCC 25177 / H37Ra), this protein is R2-like ligand binding oxidase.